The following is a 142-amino-acid chain: Large ribosomal subunit protein uL11 (142 aa).

This sequence belongs to the universal ribosomal protein uL11 family. In terms of assembly, part of the ribosomal stalk of the 50S ribosomal subunit. Interacts with L10 and the large rRNA to form the base of the stalk. L10 forms an elongated spine to which L12 dimers bind in a sequential fashion forming a multimeric L10(L12)X complex. In terms of processing, one or more lysine residues are methylated.

Its function is as follows. Forms part of the ribosomal stalk which helps the ribosome interact with GTP-bound translation factors. In Rhodopseudomonas palustris (strain BisA53), this protein is Large ribosomal subunit protein uL11.